The sequence spans 400 residues: Elongation factor Tu (400 aa).

Residues 10 to 210 (KPHCNVGTIG…VDSYIPIPPR (201 aa)) form the tr-type G domain. The G1 stretch occupies residues 19–26 (GHVDHGKT). 19–26 (GHVDHGKT) provides a ligand contact to GTP. Thr-26 contributes to the Mg(2+) binding site. Residues 60 to 64 (GLTIA) form a G2 region. Residues 81–84 (DCPG) form a G3 region. GTP contacts are provided by residues 81 to 85 (DCPGH) and 136 to 139 (NKCD). The tract at residues 136 to 139 (NKCD) is G4. The interval 174 to 176 (SAI) is G5.

The protein belongs to the TRAFAC class translation factor GTPase superfamily. Classic translation factor GTPase family. EF-Tu/EF-1A subfamily. In terms of assembly, monomer.

Its subcellular location is the cytoplasm. It catalyses the reaction GTP + H2O = GDP + phosphate + H(+). Functionally, GTP hydrolase that promotes the GTP-dependent binding of aminoacyl-tRNA to the A-site of ribosomes during protein biosynthesis. The protein is Elongation factor Tu of Dehalococcoides mccartyi (strain ATCC BAA-2266 / KCTC 15142 / 195) (Dehalococcoides ethenogenes (strain 195)).